The chain runs to 810 residues: Plasminogen (810 aa).

Positions 1–19 (MEHKEVVLLLLLFLKSGQG) are cleaved as a signal peptide. Positions 20–98 (EPLDDYVNTK…RDVVLFEKKV (79 aa)) constitute a PAN domain. Disulfide bonds link Cys49-Cys73, Cys53-Cys61, Cys103-Cys181, Cys124-Cys164, Cys152-Cys176, Cys185-Cys262, Cys188-Cys316, Cys206-Cys245, Cys234-Cys257, Cys275-Cys352, Cys296-Cys335, and Cys324-Cys347. 3 consecutive Kringle domains span residues 103–181 (CKTG…IPEC), 184–262 (ECMH…IPRC), and 275–352 (CLKG…IPSC). Residues 125–141 (QKWSSTSPHRPTFSPAT) show a composition bias toward polar residues. The segment at 125–145 (QKWSSTSPHRPTFSPATHPSE) is disordered. Positions 136, 158, and 172 each coordinate L-lysine. Thr365 carries an O-linked (GalNAc...) threonine glycan. Cystine bridges form between Cys377-Cys454, Cys398-Cys437, Cys426-Cys449, Cys481-Cys560, Cys502-Cys543, Cys531-Cys555, Cys567-Cys685, Cys577-Cys585, and Cys607-Cys623. Kringle domains are found at residues 377-454 (CYHG…LKKC) and 481-560 (CMFG…VPQC). Residues Asp432 and Arg445 each contribute to the L-lysine site. Positions 581-808 (VVGGCVAYPH…FVTWIEGVMR (228 aa)) constitute a Peptidase S1 domain. Phosphoserine is present on Ser597. Catalysis depends on charge relay system residues His622 and Asp665. Phosphoserine is present on Ser688. Intrachain disulfides connect Cys699–Cys766, Cys729–Cys745, and Cys756–Cys784. Ser760 (charge relay system) is an active-site residue.

It belongs to the peptidase S1 family. Plasminogen subfamily. Interacts with CSPG4 and AMOT. Interacts (via the Kringle domains) with HRG; the interaction tethers PLG to the cell surface and enhances its activation. Interacts (via Kringle 4 domain) with ADA; the interaction stimulates PLG activation when in complex with DPP4. Angiostatin: Interacts with ATP5F1A; the interaction inhibits most of the angiogenic effects of angiostatin. Post-translationally, in the presence of the inhibitor, the activation involves only cleavage after Arg-580, yielding two chains held together by two disulfide bonds. In the absence of the inhibitor, the activation involves additionally the removal of the activation peptide.

It localises to the secreted. It catalyses the reaction Preferential cleavage: Lys-|-Xaa &gt; Arg-|-Xaa, higher selectivity than trypsin. Converts fibrin into soluble products.. Converted into plasmin by plasminogen activators, both plasminogen and its activator being bound to fibrin. Activated with catalytic amounts of streptokinase. Plasmin dissolves the fibrin of blood clots and acts as a proteolytic factor in a variety of other processes including embryonic development, tissue remodeling, tumor invasion, and inflammation. In ovulation, weakens the walls of the Graafian follicle. It activates the urokinase-type plasminogen activator, collagenases and several complement zymogens, such as C1, C4 and C5. Cleavage of fibronectin and laminin leads to cell detachment and apoptosis. Also cleaves fibrin, thrombospondin and von Willebrand factor. Its role in tissue remodeling and tumor invasion may be modulated by CSPG4. Binds to cells. The sequence is that of Plasminogen (PLG) from Macaca mulatta (Rhesus macaque).